The chain runs to 389 residues: tRNA-specific 2-thiouridylase MnmA (389 aa).

Residues 35-42 and Met61 contribute to the ATP site; that span reads GMSGGVDS. Residues 121 to 123 form an interaction with target base in tRNA region; the sequence is NPD. Cys126 serves as the catalytic Nucleophile. Cys126 and Cys223 are disulfide-bonded. ATP is bound at residue Gly151. The tract at residues 173–175 is interaction with tRNA; sequence KDQ. The Cysteine persulfide intermediate role is filled by Cys223. An interaction with tRNA region spans residues 335-336; that stretch reads RY.

The protein belongs to the MnmA/TRMU family.

The protein localises to the cytoplasm. It carries out the reaction S-sulfanyl-L-cysteinyl-[protein] + uridine(34) in tRNA + AH2 + ATP = 2-thiouridine(34) in tRNA + L-cysteinyl-[protein] + A + AMP + diphosphate + H(+). Functionally, catalyzes the 2-thiolation of uridine at the wobble position (U34) of tRNA, leading to the formation of s(2)U34. In Actinobacillus pleuropneumoniae serotype 3 (strain JL03), this protein is tRNA-specific 2-thiouridylase MnmA.